The primary structure comprises 217 residues: Ribosomal RNA large subunit methyltransferase E (217 aa).

The S-adenosyl-L-methionine site is built by Gly-64, Trp-66, Asp-92, Asp-108, and Asp-133. Lys-173 functions as the Proton acceptor in the catalytic mechanism.

Belongs to the class I-like SAM-binding methyltransferase superfamily. RNA methyltransferase RlmE family.

The protein localises to the cytoplasm. It catalyses the reaction uridine(2552) in 23S rRNA + S-adenosyl-L-methionine = 2'-O-methyluridine(2552) in 23S rRNA + S-adenosyl-L-homocysteine + H(+). In terms of biological role, specifically methylates the uridine in position 2552 of 23S rRNA at the 2'-O position of the ribose in the fully assembled 50S ribosomal subunit. This is Ribosomal RNA large subunit methyltransferase E from Delftia acidovorans (strain DSM 14801 / SPH-1).